Reading from the N-terminus, the 330-residue chain is Aspartate--ammonia ligase (330 aa).

This sequence belongs to the class-II aminoacyl-tRNA synthetase family. AsnA subfamily.

It is found in the cytoplasm. The catalysed reaction is L-aspartate + NH4(+) + ATP = L-asparagine + AMP + diphosphate + H(+). The protein operates within amino-acid biosynthesis; L-asparagine biosynthesis; L-asparagine from L-aspartate (ammonia route): step 1/1. The polypeptide is Aspartate--ammonia ligase (Pectobacterium carotovorum subsp. carotovorum (strain PC1)).